We begin with the raw amino-acid sequence, 141 residues long: Large ribosomal subunit protein uL11 (141 aa).

Belongs to the universal ribosomal protein uL11 family. As to quaternary structure, part of the ribosomal stalk of the 50S ribosomal subunit. Interacts with L10 and the large rRNA to form the base of the stalk. L10 forms an elongated spine to which L12 dimers bind in a sequential fashion forming a multimeric L10(L12)X complex. In terms of processing, one or more lysine residues are methylated.

Forms part of the ribosomal stalk which helps the ribosome interact with GTP-bound translation factors. This Prochlorococcus marinus (strain SARG / CCMP1375 / SS120) protein is Large ribosomal subunit protein uL11.